Consider the following 478-residue polypeptide: Protein nucleotidyltransferase YdiU (478 aa).

Gly84, Gly86, Arg87, Lys107, Asp119, Gly120, Arg170, and Arg177 together coordinate ATP. Asp246 functions as the Proton acceptor in the catalytic mechanism. Asn247 and Asp256 together coordinate Mg(2+). Asp256 contacts ATP.

Belongs to the SELO family. Mg(2+) serves as cofactor. It depends on Mn(2+) as a cofactor.

The catalysed reaction is L-seryl-[protein] + ATP = 3-O-(5'-adenylyl)-L-seryl-[protein] + diphosphate. The enzyme catalyses L-threonyl-[protein] + ATP = 3-O-(5'-adenylyl)-L-threonyl-[protein] + diphosphate. It catalyses the reaction L-tyrosyl-[protein] + ATP = O-(5'-adenylyl)-L-tyrosyl-[protein] + diphosphate. It carries out the reaction L-histidyl-[protein] + UTP = N(tele)-(5'-uridylyl)-L-histidyl-[protein] + diphosphate. The catalysed reaction is L-seryl-[protein] + UTP = O-(5'-uridylyl)-L-seryl-[protein] + diphosphate. The enzyme catalyses L-tyrosyl-[protein] + UTP = O-(5'-uridylyl)-L-tyrosyl-[protein] + diphosphate. In terms of biological role, nucleotidyltransferase involved in the post-translational modification of proteins. It can catalyze the addition of adenosine monophosphate (AMP) or uridine monophosphate (UMP) to a protein, resulting in modifications known as AMPylation and UMPylation. The polypeptide is Protein nucleotidyltransferase YdiU (Shigella sonnei (strain Ss046)).